The chain runs to 282 residues: Phycocyanobilin lyase subunit beta (282 aa).

Belongs to the CpcE/RpcE/PecE family. In terms of assembly, cpcE and CpcF associate to form a lyase.

Required for the chromophorylation of the CpcA gene product. This chain is Phycocyanobilin lyase subunit beta (cpcF1), found in Pseudanabaena tenuis (strain PCC 7409).